Reading from the N-terminus, the 235-residue chain is 2-C-methyl-D-erythritol 4-phosphate cytidylyltransferase (235 aa).

This sequence belongs to the IspD/TarI cytidylyltransferase family. IspD subfamily.

It carries out the reaction 2-C-methyl-D-erythritol 4-phosphate + CTP + H(+) = 4-CDP-2-C-methyl-D-erythritol + diphosphate. It participates in isoprenoid biosynthesis; isopentenyl diphosphate biosynthesis via DXP pathway; isopentenyl diphosphate from 1-deoxy-D-xylulose 5-phosphate: step 2/6. In terms of biological role, catalyzes the formation of 4-diphosphocytidyl-2-C-methyl-D-erythritol from CTP and 2-C-methyl-D-erythritol 4-phosphate (MEP). The protein is 2-C-methyl-D-erythritol 4-phosphate cytidylyltransferase of Mycolicibacterium paratuberculosis (strain ATCC BAA-968 / K-10) (Mycobacterium paratuberculosis).